The following is a 485-amino-acid chain: D-alanine--D-alanyl carrier protein ligase (485 aa).

144–145 (TS) contributes to the ATP binding site. Aspartate 189 is a binding site for D-alanine. ATP is bound at residue 284–289 (NTYGPT). Valine 293 contacts D-alanine. ATP-binding residues include aspartate 365 and lysine 473. Position 473 (lysine 473) interacts with D-alanine.

This sequence belongs to the ATP-dependent AMP-binding enzyme family. DltA subfamily.

Its subcellular location is the cytoplasm. It catalyses the reaction holo-[D-alanyl-carrier protein] + D-alanine + ATP = D-alanyl-[D-alanyl-carrier protein] + AMP + diphosphate. Its pathway is cell wall biogenesis; lipoteichoic acid biosynthesis. Catalyzes the first step in the D-alanylation of lipoteichoic acid (LTA), the activation of D-alanine and its transfer onto the D-alanyl carrier protein (Dcp) DltC. In an ATP-dependent two-step reaction, forms a high energy D-alanyl-AMP intermediate, followed by transfer of the D-alanyl residue as a thiol ester to the phosphopantheinyl prosthetic group of the Dcp. D-alanylation of LTA plays an important role in modulating the properties of the cell wall in Gram-positive bacteria, influencing the net charge of the cell wall. In Staphylococcus haemolyticus (strain JCSC1435), this protein is D-alanine--D-alanyl carrier protein ligase.